Consider the following 591-residue polypeptide: Aspartate--tRNA ligase (591 aa).

Glu176 is a binding site for L-aspartate. The interval 200–203 (QILK) is aspartate. Arg222 is a binding site for L-aspartate. Residues 222–224 (RDE) and Gln231 contribute to the ATP site. His450 is a binding site for L-aspartate. Residue Glu484 participates in ATP binding. Residue Arg491 coordinates L-aspartate. Residue 536–539 (GLDR) participates in ATP binding.

It belongs to the class-II aminoacyl-tRNA synthetase family. Type 1 subfamily. As to quaternary structure, homodimer.

Its subcellular location is the cytoplasm. The catalysed reaction is tRNA(Asp) + L-aspartate + ATP = L-aspartyl-tRNA(Asp) + AMP + diphosphate. In terms of biological role, catalyzes the attachment of L-aspartate to tRNA(Asp) in a two-step reaction: L-aspartate is first activated by ATP to form Asp-AMP and then transferred to the acceptor end of tRNA(Asp). The chain is Aspartate--tRNA ligase from Listeria monocytogenes serovar 1/2a (strain ATCC BAA-679 / EGD-e).